The primary structure comprises 102 residues: Vacuolar ATPase assembly integral membrane protein VMA21 (102 aa).

Residues 1–30 are Cytoplasmic-facing; sequence MERYDKATLNAAFAPEFRQNEGSLTSTLRT. The chain crosses the membrane as a helical span at residues 31-51; it reads LLFFTALMITLPVGLYFSSKA. The Lumenal segment spans residues 52 to 66; that stretch reads YIFEGTLGMSNRDSY. Residues 67-87 form a helical membrane-spanning segment; sequence FYAAIVAVVTVHVVLAMFVYV. At 88 to 102 the chain is on the cytoplasmic side; sequence AWSEGTRQWREGKQD.

The protein belongs to the VMA21 family. In terms of assembly, associates with the V0 complex of the vacuolar ATPase (V-ATPase). Interacts with ATP6AP2.

Its subcellular location is the endoplasmic reticulum membrane. The protein resides in the endoplasmic reticulum-Golgi intermediate compartment membrane. It is found in the cytoplasmic vesicle. It localises to the COPII-coated vesicle membrane. Functionally, required for the assembly of the V0 complex of the vacuolar ATPase (V-ATPase) in the endoplasmic reticulum. The polypeptide is Vacuolar ATPase assembly integral membrane protein VMA21 (Gallus gallus (Chicken)).